The primary structure comprises 380 residues: Protein neprosin (380 aa).

An N-terminal signal peptide occupies residues 1 to 24 (MQAKFFTFVILSSVFYFNYPLAEA). Residues 25-128 (RSIQARLANK…QFPNLKFAPP (104 aa)) constitute a propeptide, activation peptide. Residues Cys52 and Cys98 are joined by a disulfide bond. N-linked (GlcNAc...) asparagine glycans are attached at residues Asn68, Asn145, and Asn152. The region spanning 129–380 (SANTNHQYAV…YLFYGGPGCQ (252 aa)) is the Neprosin PEP catalytic domain. The active site involves Glu188. Cysteines 219 and 224 form a disulfide. Asn253 carries an N-linked (GlcNAc...) asparagine glycan. Glu297 is a catalytic residue. A disulfide bond links Cys358 and Cys379.

The protein belongs to the peptidase G3 family.

It is found in the secreted. The catalysed reaction is Hydrolysis of Pro-|-Xaa &gt;&gt; Ala-|-Xaa in oligopeptides.. Weakly inhibited by the aspartic protease inhibitor pepstatin. Weakly inhibited by pepstatin A (IC(50) of 140 uM) and 1,2-epoxy-3-(p-nitrophenoxy)propane (EPNP) (IC(50) of 480 uM). Activity is not affected by the POP inhibitor Z-Pro-prolinal inhibitor or the denaturant urea. In terms of biological role, glutamic endopeptidase that preferentially cleaves peptide bonds on the C-terminal side of proline residues. Also cleaves peptide bonds on the C-terminal side of alanine residues but with less efficiency. In contrast to most proline-cleaving enzymes, effectively degrades proteins of any size. Found in the viscoelastic fluid of the pitcher, and so likely functions in the digestion of their prey. This Nepenthes x ventrata (Red tropical pitcher plant) protein is Protein neprosin.